Consider the following 155-residue polypeptide: Small ribosomal subunit protein uS7cz/uS7cy (155 aa).

It belongs to the universal ribosomal protein uS7 family. Part of the 30S ribosomal subunit.

It localises to the plastid. The protein resides in the chloroplast. In terms of biological role, one of the primary rRNA binding proteins, it binds directly to 16S rRNA where it nucleates assembly of the head domain of the 30S subunit. This chain is Small ribosomal subunit protein uS7cz/uS7cy (rps7-A), found in Amborella trichopoda.